A 338-amino-acid polypeptide reads, in one-letter code: D-erythrose-4-phosphate dehydrogenase (338 aa).

NAD(+) is bound at residue 12–13 (RI). Substrate contacts are provided by residues 154 to 156 (SCT), R200, 213 to 214 (TK), and R236. C155 serves as the catalytic Nucleophile. N318 is a binding site for NAD(+).

Belongs to the glyceraldehyde-3-phosphate dehydrogenase family. Epd subfamily. As to quaternary structure, homotetramer.

It localises to the cytoplasm. The catalysed reaction is D-erythrose 4-phosphate + NAD(+) + H2O = 4-phospho-D-erythronate + NADH + 2 H(+). It participates in cofactor biosynthesis; pyridoxine 5'-phosphate biosynthesis; pyridoxine 5'-phosphate from D-erythrose 4-phosphate: step 1/5. Catalyzes the NAD-dependent conversion of D-erythrose 4-phosphate to 4-phosphoerythronate. This chain is D-erythrose-4-phosphate dehydrogenase, found in Yersinia pestis bv. Antiqua (strain Antiqua).